We begin with the raw amino-acid sequence, 112 residues long: UPF0342 protein SGO_1370 (112 aa).

It belongs to the UPF0342 family.

In Streptococcus gordonii (strain Challis / ATCC 35105 / BCRC 15272 / CH1 / DL1 / V288), this protein is UPF0342 protein SGO_1370.